The sequence spans 198 residues: Endothelin-3 (198 aa).

Residues 1 to 16 (MEPGLWLLFGLTVTSA) form the signal peptide. A propeptide spanning residues 17-86 (AGLVPCPQPG…SKGGPVHGRA (70 aa)) is cleaved from the precursor. Positions 22–79 (CPQPGDAGKSGVPGTPPTARSEGDIQEPVAMTAVQGPSPRSPEQEQELGRFGEQASKG) are disordered. 2 disulfides stabilise this stretch: C89-C103 and C91-C99. A propeptide spanning residues 110–198 (INTPEQTVPY…RGNGGLRPTR (89 aa)) is cleaved from the precursor. The endothelin-like stretch occupies residues 150–164 (CACVQSQDSACLHFC). Residues 174 to 198 (SRTATNPDKEEEPASRGNGGLRPTR) are disordered.

It belongs to the endothelin/sarafotoxin family. Expressed in which included heart, lung, liver, kidney, spleen, stomach, pancreas, duodenum, colon, uterus, ovary and testis.

It is found in the secreted. Its function is as follows. Endothelins are endothelium-derived vasoconstrictor peptides. The polypeptide is Endothelin-3 (EDN3) (Canis lupus familiaris (Dog)).